Reading from the N-terminus, the 1239-residue chain is Erythroid differentiation-related factor 1 (1239 aa).

Disordered regions lie at residues Met1–Ala39, Ala219–Leu269, Pro517–Asp559, and Lys620–Gly646. Composition is skewed to low complexity over residues Ala9–Ala28 and Ser253–Ser263. A compositionally biased stretch (acidic residues) spans Asn530–Glu547. TPR repeat units follow at residues Ser693–Tyr726 and Ala914–Arg953.

It localises to the nucleus. Its function is as follows. Transcription factor involved in erythroid differentiation. Involved in transcriptional activation of the globin gene. The protein is Erythroid differentiation-related factor 1 (Edrf1) of Mus musculus (Mouse).